We begin with the raw amino-acid sequence, 456 residues long: Taurine--pyruvate aminotransferase (456 aa).

An N6-(pyridoxal phosphate)lysine modification is found at Lys280.

The protein belongs to the class-III pyridoxal-phosphate-dependent aminotransferase family. Homotetramer. Pyridoxal 5'-phosphate is required as a cofactor.

The enzyme catalyses taurine + pyruvate = sulfoacetaldehyde + L-alanine. It functions in the pathway organosulfur degradation; alkanesulfonate degradation. Functionally, involved in an anaerobic respiration pathway that converts the sulfonate taurine (2-aminoethanesulfonate) to ammonia, acetate and sulfide. Catalyzes the initial metabolic reaction of anaerobic taurine degradation, i.e. the transamination reaction between taurine and pyruvate leading to sulfoacetaldehyde and alanine. This Bilophila wadsworthia (strain 3_1_6) protein is Taurine--pyruvate aminotransferase.